Reading from the N-terminus, the 354-residue chain is Probable L-ascorbate-6-phosphate lactonase UlaG (354 aa).

The protein belongs to the UlaG family. A divalent metal cation serves as cofactor.

The protein resides in the cytoplasm. It catalyses the reaction L-ascorbate 6-phosphate + H2O = 3-dehydro-L-gulonate 6-phosphate. It functions in the pathway cofactor degradation; L-ascorbate degradation; D-xylulose 5-phosphate from L-ascorbate: step 1/4. Probably catalyzes the hydrolysis of L-ascorbate-6-P into 3-keto-L-gulonate-6-P. Is essential for L-ascorbate utilization under anaerobic conditions. This Salmonella heidelberg (strain SL476) protein is Probable L-ascorbate-6-phosphate lactonase UlaG.